Reading from the N-terminus, the 283-residue chain is MKVLFNGRLMERSECAVDIEDRGYQFGDGVYEVIRIYNGILFTLDEHIARLYKSAAEIGIDLSFSEAELKSQLKELVDINQRRDGGLYLQVTRGKAPRKHQYGAGLTPQVTAYTFPIQKPEKEQQNGVSAITADDMRWLRCDIKSLNLLYNVMIKQKAQEASAFEAILIRDGLVTEGTSSNVYVAKQNVIYTHPVTTLILNGITRMKVLQLCEENGLNYEEKAVTKDELLNADEVFITSTTAEVIPVTSIDGQTIGSGAPGPLTKNVQTALQNSILSETAKTV.

Substrate is bound at residue Tyr31. Arg50 contributes to the pyridoxal 5'-phosphate binding site. 2 residues coordinate substrate: Arg98 and His100. Lys144 functions as the Proton acceptor in the catalytic mechanism. Lys144 is modified (N6-(pyridoxal phosphate)lysine). A pyridoxal 5'-phosphate-binding site is contributed by Glu176.

This sequence belongs to the class-IV pyridoxal-phosphate-dependent aminotransferase family. Homodimer. Requires pyridoxal 5'-phosphate as cofactor.

It catalyses the reaction D-alanine + 2-oxoglutarate = D-glutamate + pyruvate. In terms of biological role, acts on the D-isomers of alanine, leucine, aspartate, glutamate, aminobutyrate, norvaline and asparagine. The enzyme transfers an amino group from a substrate D-amino acid to the pyridoxal phosphate cofactor to form pyridoxamine and an alpha-keto acid in the first half-reaction. The second half-reaction is the reverse of the first, transferring the amino group from the pyridoxamine to a second alpha-keto acid to form the product D-amino acid via a ping-pong mechanism. This is an important process in the formation of D-alanine and D-glutamate, which are essential bacterial cell wall components. This chain is D-alanine aminotransferase (dat), found in Bacillus licheniformis.